We begin with the raw amino-acid sequence, 413 residues long: Cell surface GPI-anchored protein ECM33 (413 aa).

An N-terminal signal peptide occupies residues 1 to 20 (MQIKSFLLPIVAALLTSVSA). 11 N-linked (GlcNAc...) asparagine glycosylation sites follow: asparagine 93, asparagine 102, asparagine 172, asparagine 209, asparagine 222, asparagine 227, asparagine 279, asparagine 290, asparagine 306, asparagine 322, and asparagine 382. The disordered stretch occupies residues 347–390 (YVCTHPANPSSSSKSGSSTQTGKSDSKSSDGSSSSNSSSSSKKG). Over residues 356–390 (SSSSKSGSSTQTGKSDSKSSDGSSSSNSSSSSKKG) the composition is skewed to low complexity. The GPI-anchor amidated glycine moiety is linked to residue glycine 390. A propeptide spans 391–413 (ASNVLVVPGMVLTTALGVLLALI) (removed in mature form).

It belongs to the SPS2 family.

Its subcellular location is the cell membrane. It localises to the secreted. It is found in the cell wall. Its function is as follows. Cell surface protein required for proper cell wall integrity and for the correct assembly of the mannoprotein outer layer of the cell wall. The sequence is that of Cell surface GPI-anchored protein ECM33 (ECM331) from Candida albicans (strain SC5314 / ATCC MYA-2876) (Yeast).